The following is a 102-amino-acid chain: Thioredoxin (102 aa).

The Thioredoxin domain occupies 2–102 (VTEIKSLKQL…KAKIVQLVSQ (101 aa)). The cysteines at positions 30 and 33 are disulfide-linked.

It belongs to the thioredoxin family.

Functionally, participates in various redox reactions through the reversible oxidation of its active center dithiol to a disulfide and catalyzes dithiol-disulfide exchange reactions. In Mycoplasma pneumoniae (strain ATCC 29342 / M129 / Subtype 1) (Mycoplasmoides pneumoniae), this protein is Thioredoxin (trxA).